The sequence spans 366 residues: Ribosomal RNA large subunit methyltransferase M (366 aa).

S-adenosyl-L-methionine-binding positions include S188, 221–224 (CPGG), D240, D260, and D277. The Proton acceptor role is filled by K306.

It belongs to the class I-like SAM-binding methyltransferase superfamily. RNA methyltransferase RlmE family. RlmM subfamily. In terms of assembly, monomer.

It is found in the cytoplasm. It carries out the reaction cytidine(2498) in 23S rRNA + S-adenosyl-L-methionine = 2'-O-methylcytidine(2498) in 23S rRNA + S-adenosyl-L-homocysteine + H(+). In terms of biological role, catalyzes the 2'-O-methylation at nucleotide C2498 in 23S rRNA. The sequence is that of Ribosomal RNA large subunit methyltransferase M from Photorhabdus laumondii subsp. laumondii (strain DSM 15139 / CIP 105565 / TT01) (Photorhabdus luminescens subsp. laumondii).